Reading from the N-terminus, the 194-residue chain is ATP-dependent Clp protease proteolytic subunit 3 (194 aa).

Residue Ser96 is the Nucleophile of the active site. The active site involves His121.

The protein belongs to the peptidase S14 family. Fourteen ClpP subunits assemble into 2 heptameric rings which stack back to back to give a disk-like structure with a central cavity, resembling the structure of eukaryotic proteasomes.

Its subcellular location is the cytoplasm. It catalyses the reaction Hydrolysis of proteins to small peptides in the presence of ATP and magnesium. alpha-casein is the usual test substrate. In the absence of ATP, only oligopeptides shorter than five residues are hydrolyzed (such as succinyl-Leu-Tyr-|-NHMec, and Leu-Tyr-Leu-|-Tyr-Trp, in which cleavage of the -Tyr-|-Leu- and -Tyr-|-Trp bonds also occurs).. In terms of biological role, cleaves peptides in various proteins in a process that requires ATP hydrolysis. Has a chymotrypsin-like activity. Plays a major role in the degradation of misfolded proteins. The sequence is that of ATP-dependent Clp protease proteolytic subunit 3 from Rhizobium johnstonii (strain DSM 114642 / LMG 32736 / 3841) (Rhizobium leguminosarum bv. viciae).